Here is a 648-residue protein sequence, read N- to C-terminus: Phosphatidylinositol polyphosphate 5-phosphatase type IV (648 aa).

Positions 1 to 64 (MPSKSACLRH…PLSMPAKPSN (64 aa)) are disordered. A compositionally biased stretch (polar residues) spans 36-54 (TSASLPAADSQSSQTNSMP). 2 repeat units span residues 59–62 (PAKP) and 76–79 (PQPP). Positions 59-243 (PAKPSNQNLQ…AHSNLGPSRP (185 aa)) are 4 X 4 AA repeats of P-X-X-P. The disordered stretch occupies residues 99–158 (RFRGSQEDLTVQNGASPCRGSLQDSVAQSPAYSRPLPCLSTSLQEIPKPRRATGSEGGSP). Residue S103 is modified to Phosphoserine. The span at 120-129 (LQDSVAQSPA) shows a compositional bias: polar residues. Copy 3 of the repeat occupies 147–150 (PRRA). At T197 the chain carries Phosphothreonine. Repeat unit 4 spans residues 240-243 (PSRP). S245 and S260 each carry phosphoserine. C645 is modified (cysteine methyl ester). The S-farnesyl cysteine moiety is linked to residue C645. A propeptide spans 646-648 (TVS) (removed in mature form).

It belongs to the inositol 1,4,5-trisphosphate 5-phosphatase type IV family. Interacts (when prenylated) with PDE6D; this is important for normal location in cilia.

It localises to the cytoplasm. It is found in the cytoskeleton. Its subcellular location is the cilium axoneme. The protein resides in the golgi apparatus. The protein localises to the golgi stack membrane. It localises to the cell membrane. It is found in the cell projection. Its subcellular location is the ruffle. The protein resides in the nucleus. It carries out the reaction a 1,2-diacyl-sn-glycero-3-phospho-(1D-myo-inositol-4,5-bisphosphate) + H2O = a 1,2-diacyl-sn-glycero-3-phospho-(1D-myo-inositol 4-phosphate) + phosphate. The catalysed reaction is a 1,2-diacyl-sn-glycero-3-phospho-(1D-myo-inositol-3,4,5-trisphosphate) + H2O = a 1,2-diacyl-sn-glycero-3-phospho-(1D-myo-inositol-3,4-bisphosphate) + phosphate. The enzyme catalyses a 1,2-diacyl-sn-glycero-3-phospho-(1D-myo-inositol-3,5-bisphosphate) + H2O = a 1,2-diacyl-sn-glycero-3-phospho-(1D-myo-inositol-3-phosphate) + phosphate. Phosphatidylinositol (PtdIns) phosphatase that specifically hydrolyzes the 5-phosphate of phosphatidylinositol-3,4,5-trisphosphate (PtdIns(3,4,5)P3), phosphatidylinositol 4,5-bisphosphate PtdIns (4,5)P2 and phosphatidylinositol 3,5-bisphosphate (PtdIns(3,5)P2). Specific for lipid substrates, inactive towards water soluble inositol phosphates. Plays an essential role in the primary cilium by controlling ciliary growth and phosphoinositide 3-kinase (PI3K) signaling and stability. In Rattus norvegicus (Rat), this protein is Phosphatidylinositol polyphosphate 5-phosphatase type IV (Inpp5e).